Here is a 617-residue protein sequence, read N- to C-terminus: Ceramide transfer protein (617 aa).

The segment covering 1–11 (MSDNQSWNSSG) has biased composition (polar residues). The tract at residues 1–23 (MSDNQSWNSSGSEEDLEPESGPP) is disordered. The PH domain occupies 23–117 (PVERCGVLSK…WIDSIEQHKS (95 aa)). Positions 268 to 302 (REDSWQKRLDKEIEKRRRVEEAYKNAMTELKKKSH) form a coiled coil. Residues 320–326 (EFFDAVE) carry the FFAT motif. The disordered stretch occupies residues 341-382 (EKGRSHWPPSPPSSEAHTAAGSHRLVQAPPSCPPPTDLVSSS). Residues 383-611 (DEHRFRIQVE…FTSYVQEKTA (229 aa)) enclose the START domain. An N-acylsphing-4-enine is bound by residues glutamate 466, glutamine 487, asparagine 524, and tyrosine 572.

Its subcellular location is the cytoplasm. The protein localises to the golgi apparatus. The protein resides in the endoplasmic reticulum. It catalyses the reaction N-hexadecanoylsphing-4-enine(in) = N-hexadecanoylsphing-4-enine(out). In terms of biological role, may mediate the intracellular trafficking of ceramide in a non-vesicular manner. The protein is Ceramide transfer protein (cert1) of Xenopus laevis (African clawed frog).